Reading from the N-terminus, the 157-residue chain is Protein Smg homolog (157 aa).

This sequence belongs to the Smg family.

The chain is Protein Smg homolog from Shewanella halifaxensis (strain HAW-EB4).